The sequence spans 476 residues: MDDLRDTLMAYGCIAIRAGDFNGLNDFLEQECGTRLHVAWPERCFIQLRSRSALGPFVGKMGTVCSQGAYVCCQEYLHPFGFVEGPGFMRYQLIVLIGQRGGIYCYDDLRDCIYELAPTMKDFLRHGFRHCDHFHTMRDYQRPMVQYDDYWNAVMLYRGDVESLSAEVTKRGYASYSIDDPFDECPDTHFAFWTHNTEVMKFKETSFSVVRAGGSIQTMELMIRTVPRITCYHQLLGALGHEVPERKEFLVRQYVLVDTFGVVYGYDPAMDAVYRLAEDVVMFTCVMGKKGHRNHRFSGRREAIVRLEKTPTCQHPKKTPDPMIMFDEDDDDELSLPRNVMTHEEAESRLYDAITENLMHCVKLVTTDSPLATHLWPQELQALCDSPALSLCTDDVEGVRQKLRARTGSLHHFELSYRFHDEDPETYMGFLWDIPSCDRCVRRRRFKVCDVGRRHIIPGAANGMPPLTPPHAYMNN.

The protein belongs to the herpesviridae US22 family. In terms of assembly, interacts with host pro-caspase-8/CASP8; this interaction inhibits CASP8 activation.

Its function is as follows. Plays a role in the inhibition of apoptosis by interacting with the pro-domain of pro-caspase-8/CASP8 and thus preventing its activation. The sequence is that of Viral inhibitor of caspase-8-induced apoptosis (UL36) from Human cytomegalovirus (strain Merlin) (HHV-5).